Here is a 341-residue protein sequence, read N- to C-terminus: MSTDKTDVKMGVLRIYLDGAYGIGKTTAAEEFLHHFAITPNRILLIGEPLSYWRNLAGEDAICGIYGTQTRRLNGDVSPEDAQRLTAHFQSLFCSPHAIMHAKISALMDTSTSDLVQVNKEPYKIMLSDRHPIASTICFPLSRYLVGDMSPAALPGLLFTLPAEPPGTNLVVCTVSLPSHLSRVSKRARPGETVNLPFVMVLRNVYIMLINTIIFLKTNNWHAGWNTLSFCNDVFKQKLQKSECIKLREVPGIEDTLFAVLKLPELCGEFGNILPLWAWGMETLSNCLRSMSPFVLSLEQTPQHAAQELKTLLPQMTPANMSSGAWNILKELVNAVQDNTS.

Residue 19 to 26 coordinates ATP; sequence GAYGIGKT. Glutamate 48 acts as the Proton acceptor in catalysis. Substrate-binding residues include tyrosine 66 and glutamine 90. Residue arginine 183 participates in ATP binding. Position 189 (arginine 189) interacts with substrate.

The protein belongs to the herpesviridae thymidine kinase family. Homodimer.

It catalyses the reaction thymidine + ATP = dTMP + ADP + H(+). Functionally, catalyzes the transfer of the gamma-phospho group of ATP to thymidine to generate dTMP in the salvage pathway of pyrimidine synthesis. The dTMP serves as a substrate for DNA polymerase during viral DNA replication. Allows the virus to be reactivated and to grow in non-proliferative cells lacking a high concentration of phosphorylated nucleic acid precursors. This Varicella-zoster virus (strain Oka vaccine) (HHV-3) protein is Thymidine kinase.